The following is a 151-amino-acid chain: Nucleoside diphosphate kinase (151 aa).

Lysine 10, phenylalanine 58, arginine 86, threonine 92, arginine 103, and asparagine 113 together coordinate ATP. The active-site Pros-phosphohistidine intermediate is histidine 116.

This sequence belongs to the NDK family. Homotetramer. The cofactor is Mg(2+).

The protein resides in the cytoplasm. It catalyses the reaction dZDP + ATP = dZTP + ADP. The catalysed reaction is a 2'-deoxyribonucleoside 5'-diphosphate + ATP = a 2'-deoxyribonucleoside 5'-triphosphate + ADP. It carries out the reaction a ribonucleoside 5'-diphosphate + ATP = a ribonucleoside 5'-triphosphate + ADP. It participates in purine metabolism. In terms of biological role, major role in the synthesis of nucleoside triphosphates other than ATP. The ATP gamma phosphate is transferred to the NDP beta phosphate via a ping-pong mechanism, using a phosphorylated active-site intermediate. Its function is as follows. (Microbial infection) Catalyzes the phosphorylation of dZDP to dZTP, when the bacterium is infected by a phage that produces the substrate for the synthesis of dZTP (2- amino-2'-deoxyadenosine 5'-triphosphate), which is then used by the phage as a DNA polymerase substrate. This is Nucleoside diphosphate kinase from Synechococcus sp. (strain CC9605).